An 857-amino-acid polypeptide reads, in one-letter code: Putative disease resistance protein At1g50180 (857 aa).

A coiled-coil region spans residues 27 to 60; that stretch reads IGDQVKQLQDELKRLNCFLKDADEKQHESERVRN. The region spanning 148–461 is the NB-ARC domain; sequence SLREQRQSFP…AEGMVMPVKH (314 aa). An ATP-binding site is contributed by 192–199; sequence GMGGLGKT. LRR repeat units follow at residues 653–678, 680–703, 754–780, and 791–816; these read MTSLRRLSINLSSQNTDFVVVSSLSK, LKRLRGLTINVPCEPMLPPVDVTQ, LPNLKILQLFEGSFVGSKLCCSKNLEN, and MMRLVTVELKCCNKLKSVPEGTRFLK.

This sequence belongs to the disease resistance NB-LRR family.

Potential disease resistance protein. The chain is Putative disease resistance protein At1g50180 from Arabidopsis thaliana (Mouse-ear cress).